Consider the following 117-residue polypeptide: Hainantoxin-XV-3 (117 aa).

An N-terminal signal peptide occupies residues 1-20 (MKLCAVIIASLLVCVAVASS). Residues 20 to 55 (SSDNQKEFAQEKEMTREETQSLGEHEKDDEVTGSEE) are disordered. A propeptide spanning residues 21-56 (SDNQKEFAQEKEMTREETQSLGEHEKDDEVTGSEER) is cleaved from the precursor. A compositionally biased stretch (basic and acidic residues) spans 23-55 (NQKEFAQEKEMTREETQSLGEHEKDDEVTGSEE). 4 disulfides stabilise this stretch: C58-C72, C65-C78, C69-C115, and C71-C91.

This sequence belongs to the neurotoxin 03 (Tx2) family. 02 subfamily. HNTX-XV sub-subfamily. As to expression, expressed by the venom gland.

Its subcellular location is the secreted. Putative ion channel inhibitor. The sequence is that of Hainantoxin-XV-3 from Cyriopagopus hainanus (Chinese bird spider).